Consider the following 261-residue polypeptide: GTP cyclohydrolase FolE2 (261 aa).

Belongs to the GTP cyclohydrolase IV family.

It carries out the reaction GTP + H2O = 7,8-dihydroneopterin 3'-triphosphate + formate + H(+). Its pathway is cofactor biosynthesis; 7,8-dihydroneopterin triphosphate biosynthesis; 7,8-dihydroneopterin triphosphate from GTP: step 1/1. Its function is as follows. Converts GTP to 7,8-dihydroneopterin triphosphate. In Fervidobacterium nodosum (strain ATCC 35602 / DSM 5306 / Rt17-B1), this protein is GTP cyclohydrolase FolE2.